Consider the following 311-residue polypeptide: Glycine--tRNA ligase alpha subunit (311 aa).

Belongs to the class-II aminoacyl-tRNA synthetase family. As to quaternary structure, tetramer of two alpha and two beta subunits.

It is found in the cytoplasm. The enzyme catalyses tRNA(Gly) + glycine + ATP = glycyl-tRNA(Gly) + AMP + diphosphate. This Brucella anthropi (strain ATCC 49188 / DSM 6882 / CCUG 24695 / JCM 21032 / LMG 3331 / NBRC 15819 / NCTC 12168 / Alc 37) (Ochrobactrum anthropi) protein is Glycine--tRNA ligase alpha subunit.